A 163-amino-acid polypeptide reads, in one-letter code: HTH-type transcriptional regulator IscR (163 aa).

The 130-residue stretch at 2–131 folds into the HTH rrf2-type domain; sequence RLTSKGRYAV…NNITLGELVN (130 aa). The H-T-H motif DNA-binding region spans 28–51; that stretch reads LADISERQGISLSYLEQLFSRLRK. Cys92, Cys98, and Cys104 together coordinate [2Fe-2S] cluster. Positions 140–149 are enriched in basic and acidic residues; sequence DRQHTHDAPR. Residues 140-163 are disordered; that stretch reads DRQHTHDAPRSTRTQDAIDVKLRA.

[2Fe-2S] cluster is required as a cofactor.

Its function is as follows. Regulates the transcription of several operons and genes involved in the biogenesis of Fe-S clusters and Fe-S-containing proteins. The chain is HTH-type transcriptional regulator IscR from Citrobacter koseri (strain ATCC BAA-895 / CDC 4225-83 / SGSC4696).